The sequence spans 404 residues: ORC1-type DNA replication protein 2 (404 aa).

ATP is bound by residues 64 to 68 (TGKTS), Tyr-205, and Arg-217.

This sequence belongs to the CDC6/cdc18 family. In terms of assembly, interacts with MCM.

Its function is as follows. Involved in regulation of DNA replication. Stimulates the helicase activity of MCM via stimulation of its ATPase activity. Binding to MCM may result in conformational changes in MCM, leading to catalytic ATP hydrolysis by the helicase. Directly stimulates MCM movement along single-stranded and double-stranded DNA. Does not bind DNA. The protein is ORC1-type DNA replication protein 2 (cdc6-2) of Thermoplasma acidophilum (strain ATCC 25905 / DSM 1728 / JCM 9062 / NBRC 15155 / AMRC-C165).